Consider the following 296-residue polypeptide: Phosphoribosylaminoimidazole-succinocarboxamide synthase (296 aa).

Belongs to the SAICAR synthetase family.

The catalysed reaction is 5-amino-1-(5-phospho-D-ribosyl)imidazole-4-carboxylate + L-aspartate + ATP = (2S)-2-[5-amino-1-(5-phospho-beta-D-ribosyl)imidazole-4-carboxamido]succinate + ADP + phosphate + 2 H(+). Its pathway is purine metabolism; IMP biosynthesis via de novo pathway; 5-amino-1-(5-phospho-D-ribosyl)imidazole-4-carboxamide from 5-amino-1-(5-phospho-D-ribosyl)imidazole-4-carboxylate: step 1/2. The sequence is that of Phosphoribosylaminoimidazole-succinocarboxamide synthase from Trichlorobacter lovleyi (strain ATCC BAA-1151 / DSM 17278 / SZ) (Geobacter lovleyi).